The following is a 294-amino-acid chain: Bifunctional protein FolD (294 aa).

NADP(+)-binding positions include 171 to 173 (GRS), Ser-196, and Ile-237.

This sequence belongs to the tetrahydrofolate dehydrogenase/cyclohydrolase family. Homodimer.

The enzyme catalyses (6R)-5,10-methylene-5,6,7,8-tetrahydrofolate + NADP(+) = (6R)-5,10-methenyltetrahydrofolate + NADPH. It catalyses the reaction (6R)-5,10-methenyltetrahydrofolate + H2O = (6R)-10-formyltetrahydrofolate + H(+). Its pathway is one-carbon metabolism; tetrahydrofolate interconversion. Catalyzes the oxidation of 5,10-methylenetetrahydrofolate to 5,10-methenyltetrahydrofolate and then the hydrolysis of 5,10-methenyltetrahydrofolate to 10-formyltetrahydrofolate. The chain is Bifunctional protein FolD from Synechocystis sp. (strain ATCC 27184 / PCC 6803 / Kazusa).